The following is a 245-amino-acid chain: TLC domain-containing protein 5 (245 aa).

6 helical membrane-spanning segments follow: residues 1-21 (MALA…SLYI), 38-58 (LVTF…GFID), 75-95 (VHVL…CVYF), 99-119 (GALM…ALVL), 162-182 (FLFV…LLFC), and 191-211 (WFVK…MFSI). Residues 29–204 (HRSYEWSCRL…AGGVAMYAVS (176 aa)) enclose the TLC domain.

The protein belongs to the TLCD5 family.

It is found in the membrane. The chain is TLC domain-containing protein 5 from Homo sapiens (Human).